The sequence spans 382 residues: Carbamoyl phosphate synthase small chain (382 aa).

The CPSase stretch occupies residues 1–189 (MIKSALLVLE…GLPEAKSEDD (189 aa)). Serine 47 and glycine 241 together coordinate L-glutamine. The region spanning 193 to 380 (HVVAYDFGAK…IELIKHYRSS (188 aa)) is the Glutamine amidotransferase type-1 domain. The active-site Nucleophile is the cysteine 269. L-glutamine contacts are provided by leucine 270, glutamine 273, asparagine 311, glycine 313, and phenylalanine 314. Active-site residues include histidine 353 and glutamate 355.

It belongs to the CarA family. In terms of assembly, composed of two chains; the small (or glutamine) chain promotes the hydrolysis of glutamine to ammonia, which is used by the large (or ammonia) chain to synthesize carbamoyl phosphate. Tetramer of heterodimers (alpha,beta)4.

The enzyme catalyses hydrogencarbonate + L-glutamine + 2 ATP + H2O = carbamoyl phosphate + L-glutamate + 2 ADP + phosphate + 2 H(+). The catalysed reaction is L-glutamine + H2O = L-glutamate + NH4(+). The protein operates within amino-acid biosynthesis; L-arginine biosynthesis; carbamoyl phosphate from bicarbonate: step 1/1. It participates in pyrimidine metabolism; UMP biosynthesis via de novo pathway; (S)-dihydroorotate from bicarbonate: step 1/3. Its function is as follows. Small subunit of the glutamine-dependent carbamoyl phosphate synthetase (CPSase). CPSase catalyzes the formation of carbamoyl phosphate from the ammonia moiety of glutamine, carbonate, and phosphate donated by ATP, constituting the first step of 2 biosynthetic pathways, one leading to arginine and/or urea and the other to pyrimidine nucleotides. The small subunit (glutamine amidotransferase) binds and cleaves glutamine to supply the large subunit with the substrate ammonia. The chain is Carbamoyl phosphate synthase small chain from Salmonella typhi.